The primary structure comprises 368 residues: MTVTRIGVGGTSTPYDVVVGNGILGELPALVGERAQRVAVIHPDTLEEKARPVCEILRTAGYDVFPLPVPDGEAAKDVSVAADLWARLGQAAFTRTDVIVGVGGGATTDLAGFVAATWLRGVRAILVPTTLLGMVDAAVGGKTGINTAEGKNLVGAFHPPAGVVCDLDTLPSLPREDYIGGLAEVIKAGFIADPVILDLVEADPEAATRPDGAHTRELIERAIAVKAEVVSADLRESGRREILNYGHTLGHAIERAENYTFRHGYAISIGMVFAAELARLDGRIDAALVARHRRILESVGLPVRYRADAWPALRDTIRVDKKTRGATLRFVVLDDVAAPAILAGPSDALLAQAYQAVSGVAPDAPDTD.

NAD(+) is bound by residues aspartate 71–lysine 76, glycine 105–aspartate 109, threonine 129–threonine 130, lysine 142, and lysine 151. Residues glutamate 184, histidine 247, and histidine 263 each contribute to the Zn(2+) site.

The protein belongs to the sugar phosphate cyclases superfamily. Dehydroquinate synthase family. Requires Co(2+) as cofactor. It depends on Zn(2+) as a cofactor. The cofactor is NAD(+).

The protein localises to the cytoplasm. It carries out the reaction 7-phospho-2-dehydro-3-deoxy-D-arabino-heptonate = 3-dehydroquinate + phosphate. Its pathway is metabolic intermediate biosynthesis; chorismate biosynthesis; chorismate from D-erythrose 4-phosphate and phosphoenolpyruvate: step 2/7. Catalyzes the conversion of 3-deoxy-D-arabino-heptulosonate 7-phosphate (DAHP) to dehydroquinate (DHQ). The protein is 3-dehydroquinate synthase of Thermobifida fusca (strain YX).